The primary structure comprises 139 residues: uncharacterized protein (139 aa).

Residues 22-38 (SVMSVCFMTMSATVLPI) traverse the membrane as a helical segment.

The protein resides in the membrane. This is an uncharacterized protein from Saccharomyces cerevisiae (strain ATCC 204508 / S288c) (Baker's yeast).